A 595-amino-acid chain; its full sequence is Adenine deaminase (595 aa).

This sequence belongs to the metallo-dependent hydrolases superfamily. Adenine deaminase family. As to quaternary structure, homodimer. It depends on Mn(2+) as a cofactor.

It catalyses the reaction adenine + H2O + H(+) = hypoxanthine + NH4(+). This chain is Adenine deaminase, found in Serratia proteamaculans (strain 568).